A 500-amino-acid chain; its full sequence is Archaeal-type glutamate synthase [NADPH] (500 aa).

2 4Fe-4S ferredoxin-type domains span residues 7 to 38 (SKFIVDRIEDRCIKCKVCITQCSFDTHYYDED) and 40 to 69 (DQIKVRNQNCVGCHRCVTFCPTNALVVRNN). Positions 18, 21, 24, 28, 49, 52, 55, and 59 each coordinate [4Fe-4S] cluster.

Belongs to the glutamate synthase family. FMN is required as a cofactor.

The catalysed reaction is 2 L-glutamate + NADP(+) = L-glutamine + 2-oxoglutarate + NADPH + H(+). The chain is Archaeal-type glutamate synthase [NADPH] from Dehalococcoides mccartyi (strain ATCC BAA-2266 / KCTC 15142 / 195) (Dehalococcoides ethenogenes (strain 195)).